The following is a 275-amino-acid chain: Elongation factor Ts (275 aa).

The segment at 76 to 79 (TDFV) is involved in Mg(2+) ion dislocation from EF-Tu.

This sequence belongs to the EF-Ts family.

The protein localises to the cytoplasm. Functionally, associates with the EF-Tu.GDP complex and induces the exchange of GDP to GTP. It remains bound to the aminoacyl-tRNA.EF-Tu.GTP complex up to the GTP hydrolysis stage on the ribosome. This chain is Elongation factor Ts, found in Salinispora tropica (strain ATCC BAA-916 / DSM 44818 / JCM 13857 / NBRC 105044 / CNB-440).